The chain runs to 304 residues: ATP phosphoribosyltransferase (304 aa).

This sequence belongs to the ATP phosphoribosyltransferase family. Long subfamily. The cofactor is Mg(2+).

It is found in the cytoplasm. It catalyses the reaction 1-(5-phospho-beta-D-ribosyl)-ATP + diphosphate = 5-phospho-alpha-D-ribose 1-diphosphate + ATP. It participates in amino-acid biosynthesis; L-histidine biosynthesis; L-histidine from 5-phospho-alpha-D-ribose 1-diphosphate: step 1/9. With respect to regulation, feedback inhibited by histidine. Functionally, catalyzes the condensation of ATP and 5-phosphoribose 1-diphosphate to form N'-(5'-phosphoribosyl)-ATP (PR-ATP). Has a crucial role in the pathway because the rate of histidine biosynthesis seems to be controlled primarily by regulation of HisG enzymatic activity. The sequence is that of ATP phosphoribosyltransferase from Xanthomonas campestris pv. campestris (strain 8004).